Reading from the N-terminus, the 332-residue chain is MSSGAPSGSSMSSTPGSPPPRAGGPNSVSFKDLCCLFCCPPFPSSIVSKLAFMPPEPSYTITEDNKLVLIEGRAAWPHQEVDMANCVEMRITRTRRRNRVACTMIRPLPNSHFTLLFSHGNAVDLGQMTSFLYGLGFHLNCNVFSYDYSGYGCSTGKPSEKNLYADITAAFELLKSEFGVPKEKIILYGQSIGTVPSVDLASREDLAALVLHSPLMSGMRVAFPGTTTTWCCDAFPSIEKVPRVKCPTLVIHGTDDEVIDFSHGVSIYERCPTSVEPLWVPGAGHNDVELHAAYLERLRSFIDMEASAIRVTAPITNATSTNSRTISNGTSS.

Low complexity predominate over residues 1–15; it reads MSSGAPSGSSMSSTP. The interval 1 to 24 is disordered; it reads MSSGAPSGSSMSSTPGSPPPRAGG. Residues serine 191, aspartate 256, and histidine 285 each act as charge relay system in the active site.

It belongs to the AB hydrolase superfamily. ABHD17 family. Palmitoylated on cysteine residues located in a cysteine cluster at the N-terminus which promotes membrane localization and localization to sensory neuron endings. In terms of tissue distribution, expressed in a subset of neurons including AIY, HSN, ADF, AFD, AWC, AWB and NSM, hypodermis, pharyngeal muscle and intestine.

Its subcellular location is the cell membrane. The protein localises to the cytoplasmic vesicle membrane. The catalysed reaction is S-hexadecanoyl-L-cysteinyl-[protein] + H2O = L-cysteinyl-[protein] + hexadecanoate + H(+). Its function is as follows. Hydrolyzes fatty acids from S-acylated cysteine residues in proteins. Acts in sensory neurons including AWC to regulate starvation-induced thermotaxis plasticity and salt learning behavior. The polypeptide is Alpha/beta hydrolase domain-containing protein aho-3 (Caenorhabditis elegans).